Reading from the N-terminus, the 644-residue chain is 3D-(3,5/4)-trihydroxycyclohexane-1,2-dione hydrolase (644 aa).

Glu65 contacts thiamine diphosphate. Residues 442–522 are thiamine pyrophosphate binding; the sequence is SLPGDLHKVW…INILLFDNAG (81 aa). Mg(2+)-binding residues include Asp493 and Asn520.

This sequence belongs to the TPP enzyme family. Mg(2+) serves as cofactor. The cofactor is thiamine diphosphate.

It carries out the reaction 3D-3,5/4-trihydroxycyclohexane-1,2-dione + H2O = 5-deoxy-D-glucuronate + H(+). It participates in polyol metabolism; myo-inositol degradation into acetyl-CoA; acetyl-CoA from myo-inositol: step 3/7. Involved in the cleavage of the C1-C2 bond of 3D-(3,5/4)-trihydroxycyclohexane-1,2-dione (THcHDO) to yield 5-deoxy-glucuronate (5DG). In Clostridium tetani (strain Massachusetts / E88), this protein is 3D-(3,5/4)-trihydroxycyclohexane-1,2-dione hydrolase.